The sequence spans 316 residues: Protoheme IX farnesyltransferase (316 aa).

9 helical membrane passes run 29 to 49, 54 to 74, 102 to 122, 123 to 143, 151 to 171, 179 to 199, 224 to 241, 245 to 267, and 283 to 303; these read IIPLLLITTAASMWIASEGRV, LLITLLGGTLAAASAQTLNCI, LIFALALGVLSFALLATFVNV, LSGCLALSGIVFYMLVYTHWL, IVIGGAAGSIPPLVGWAAVTG, VLFALIFLWTPPHFWALALMI, IWYYSLLVVPFSLLLVYP, LGILYLAIAIILGGQFLVKAWQL, and FSIFYLMLLCLAMVIDSLPVT.

It belongs to the UbiA prenyltransferase family. Protoheme IX farnesyltransferase subfamily.

It is found in the cell inner membrane. It carries out the reaction heme b + (2E,6E)-farnesyl diphosphate + H2O = Fe(II)-heme o + diphosphate. The protein operates within porphyrin-containing compound metabolism; heme O biosynthesis; heme O from protoheme: step 1/1. Its function is as follows. Converts heme B (protoheme IX) to heme O by substitution of the vinyl group on carbon 2 of heme B porphyrin ring with a hydroxyethyl farnesyl side group. This is Protoheme IX farnesyltransferase from Synechocystis sp. (strain ATCC 27184 / PCC 6803 / Kazusa).